A 537-amino-acid chain; its full sequence is DEAD-box ATP-dependent RNA helicase 5 (537 aa).

Residues 1–97 (MAGQKQELPV…EDLGEGESEQ (97 aa)) form a disordered region. Residues 22 to 80 (TNKKKKKSKKNKHTEENHEVEEVPQEVTNGVEEELSNKEKKKKRKREEKESEKNKKKDV) adopt a coiled-coil conformation. Basic residues predominate over residues 23 to 33 (NKKKKKSKKNK). Residues 68-87 (EEKESEKNKKKDVPEKKLEA) show a composition bias toward basic and acidic residues. The Q motif signature appears at 116–142 (KTFAESNLPENVLDCCKTFEKPSPIQS). The region spanning 145-324 (WPFLLDGRDL…QEFMDPNPIK (180 aa)) is the Helicase ATP-binding domain. Residue 158–165 (AKTGSGKT) participates in ATP binding. The short motif at 272-275 (DEAD) is the DEAD box element. Residues 349–500 (ARDQRLIALL…VVPADLLKFG (152 aa)) enclose the Helicase C-terminal domain. Serine 533 bears the Phosphoserine mark.

The protein belongs to the DEAD box helicase family. DDX5/DBP2 subfamily.

The protein resides in the nucleus. It localises to the nucleolus. It catalyses the reaction ATP + H2O = ADP + phosphate + H(+). In terms of biological role, ATP-dependent RNA helicase required for 60S ribosomal subunit synthesis. Involved in efficient pre-rRNA processing, predominantly at site A3, which is necessary for the normal formation of 25S and 5.8S rRNAs. In Arabidopsis thaliana (Mouse-ear cress), this protein is DEAD-box ATP-dependent RNA helicase 5 (RH5).